An 89-amino-acid chain; its full sequence is Small ribosomal subunit protein uS14 (89 aa).

This sequence belongs to the universal ribosomal protein uS14 family. Part of the 30S ribosomal subunit. Contacts proteins S3 and S10.

In terms of biological role, binds 16S rRNA, required for the assembly of 30S particles and may also be responsible for determining the conformation of the 16S rRNA at the A site. This chain is Small ribosomal subunit protein uS14, found in Chloroherpeton thalassium (strain ATCC 35110 / GB-78).